A 306-amino-acid polypeptide reads, in one-letter code: Ribosomal RNA small subunit methyltransferase A (306 aa).

Asparagine 37, valine 39, glycine 64, glutamate 85, aspartate 115, and asparagine 134 together coordinate S-adenosyl-L-methionine.

The protein belongs to the class I-like SAM-binding methyltransferase superfamily. rRNA adenine N(6)-methyltransferase family. RsmA subfamily.

It is found in the cytoplasm. The catalysed reaction is adenosine(1518)/adenosine(1519) in 16S rRNA + 4 S-adenosyl-L-methionine = N(6)-dimethyladenosine(1518)/N(6)-dimethyladenosine(1519) in 16S rRNA + 4 S-adenosyl-L-homocysteine + 4 H(+). Specifically dimethylates two adjacent adenosines (A1518 and A1519) in the loop of a conserved hairpin near the 3'-end of 16S rRNA in the 30S particle. May play a critical role in biogenesis of 30S subunits. The chain is Ribosomal RNA small subunit methyltransferase A from Mycobacterium leprae (strain Br4923).